A 979-amino-acid polypeptide reads, in one-letter code: Glycine dehydrogenase (decarboxylating) (979 aa).

Residue K726 is modified to N6-(pyridoxal phosphate)lysine.

It belongs to the GcvP family. In terms of assembly, the glycine cleavage system is composed of four proteins: P, T, L and H. The cofactor is pyridoxal 5'-phosphate.

It catalyses the reaction N(6)-[(R)-lipoyl]-L-lysyl-[glycine-cleavage complex H protein] + glycine + H(+) = N(6)-[(R)-S(8)-aminomethyldihydrolipoyl]-L-lysyl-[glycine-cleavage complex H protein] + CO2. In terms of biological role, the glycine cleavage system catalyzes the degradation of glycine. The P protein binds the alpha-amino group of glycine through its pyridoxal phosphate cofactor; CO(2) is released and the remaining methylamine moiety is then transferred to the lipoamide cofactor of the H protein. In Ralstonia pickettii (strain 12J), this protein is Glycine dehydrogenase (decarboxylating).